Consider the following 520-residue polypeptide: Protein U4 (520 aa).

The protein belongs to the herpesviridae U4 family.

This Elephantid herpesvirus 1 (isolate Asian elephant/Berlin/Kiba/1998) (EIHV-1) protein is Protein U4.